The primary structure comprises 205 residues: Thymidylate kinase (205 aa).

10–17 (GIDGAGKT) provides a ligand contact to ATP.

The protein belongs to the thymidylate kinase family.

It catalyses the reaction dTMP + ATP = dTDP + ADP. Phosphorylation of dTMP to form dTDP in both de novo and salvage pathways of dTTP synthesis. This Nitrosospira multiformis (strain ATCC 25196 / NCIMB 11849 / C 71) protein is Thymidylate kinase.